We begin with the raw amino-acid sequence, 165 residues long: Phosphopantetheine adenylyltransferase (165 aa).

A substrate-binding site is contributed by Thr-11. ATP contacts are provided by residues 11 to 12 (TF) and His-19. The substrate site is built by Lys-43, Val-75, and Arg-89. Residues 90–92 (GLR), Glu-100, and 125–131 (YQFISST) each bind ATP.

This sequence belongs to the bacterial CoaD family. As to quaternary structure, homohexamer. Mg(2+) is required as a cofactor.

It localises to the cytoplasm. The enzyme catalyses (R)-4'-phosphopantetheine + ATP + H(+) = 3'-dephospho-CoA + diphosphate. The protein operates within cofactor biosynthesis; coenzyme A biosynthesis; CoA from (R)-pantothenate: step 4/5. Reversibly transfers an adenylyl group from ATP to 4'-phosphopantetheine, yielding dephospho-CoA (dPCoA) and pyrophosphate. The chain is Phosphopantetheine adenylyltransferase from Acidovorax ebreus (strain TPSY) (Diaphorobacter sp. (strain TPSY)).